We begin with the raw amino-acid sequence, 1316 residues long: DNA-directed RNA polymerase subunit beta' (1316 aa).

Cysteine 60, cysteine 62, cysteine 75, and cysteine 78 together coordinate Zn(2+). Mg(2+)-binding residues include aspartate 535, aspartate 537, and aspartate 539. Residues cysteine 891, cysteine 968, cysteine 975, and cysteine 978 each coordinate Zn(2+).

Belongs to the RNA polymerase beta' chain family. As to quaternary structure, the RNAP catalytic core consists of 2 alpha, 1 beta, 1 beta' and 1 omega subunit. When a sigma factor is associated with the core the holoenzyme is formed, which can initiate transcription. The cofactor is Mg(2+). It depends on Zn(2+) as a cofactor.

The enzyme catalyses RNA(n) + a ribonucleoside 5'-triphosphate = RNA(n+1) + diphosphate. Its function is as follows. DNA-dependent RNA polymerase catalyzes the transcription of DNA into RNA using the four ribonucleoside triphosphates as substrates. The protein is DNA-directed RNA polymerase subunit beta' of Mycobacterium bovis (strain BCG / Tokyo 172 / ATCC 35737 / TMC 1019).